Consider the following 414-residue polypeptide: Imidazolonepropionase (414 aa).

The Fe(3+) site is built by His-77 and His-79. Zn(2+)-binding residues include His-77 and His-79. Residues Arg-86, Tyr-149, and His-184 each coordinate 4-imidazolone-5-propanoate. Position 149 (Tyr-149) interacts with N-formimidoyl-L-glutamate. His-249 is a Fe(3+) binding site. Position 249 (His-249) interacts with Zn(2+). Glu-252 contacts 4-imidazolone-5-propanoate. Residue Asp-323 participates in Fe(3+) binding. Position 323 (Asp-323) interacts with Zn(2+). The N-formimidoyl-L-glutamate site is built by Asn-325 and Gly-327. Ser-328 contacts 4-imidazolone-5-propanoate.

The protein belongs to the metallo-dependent hydrolases superfamily. HutI family. Zn(2+) is required as a cofactor. The cofactor is Fe(3+).

It localises to the cytoplasm. The catalysed reaction is 4-imidazolone-5-propanoate + H2O = N-formimidoyl-L-glutamate. Its pathway is amino-acid degradation; L-histidine degradation into L-glutamate; N-formimidoyl-L-glutamate from L-histidine: step 3/3. Its function is as follows. Catalyzes the hydrolytic cleavage of the carbon-nitrogen bond in imidazolone-5-propanoate to yield N-formimidoyl-L-glutamate. It is the third step in the universal histidine degradation pathway. The protein is Imidazolonepropionase of Phocaeicola vulgatus (strain ATCC 8482 / DSM 1447 / JCM 5826 / CCUG 4940 / NBRC 14291 / NCTC 11154) (Bacteroides vulgatus).